Consider the following 632-residue polypeptide: Phosphomethylpyrimidine synthase (632 aa).

The segment covering 1–13 (MNIRSNPDTTLPA) has biased composition (polar residues). The interval 1 to 26 (MNIRSNPDTTLPAVTTGPLPSSRKIF) is disordered. Substrate is bound by residues Asn221, Met250, Tyr279, His315, 335–337 (SRG), 376–379 (DGLR), and Glu415. His419 provides a ligand contact to Zn(2+). A substrate-binding site is contributed by Tyr442. Residue His483 participates in Zn(2+) binding. [4Fe-4S] cluster-binding residues include Cys563, Cys566, and Cys571.

This sequence belongs to the ThiC family. Homodimer. [4Fe-4S] cluster serves as cofactor.

The catalysed reaction is 5-amino-1-(5-phospho-beta-D-ribosyl)imidazole + S-adenosyl-L-methionine = 4-amino-2-methyl-5-(phosphooxymethyl)pyrimidine + CO + 5'-deoxyadenosine + formate + L-methionine + 3 H(+). It participates in cofactor biosynthesis; thiamine diphosphate biosynthesis. Functionally, catalyzes the synthesis of the hydroxymethylpyrimidine phosphate (HMP-P) moiety of thiamine from aminoimidazole ribotide (AIR) in a radical S-adenosyl-L-methionine (SAM)-dependent reaction. In Afipia carboxidovorans (strain ATCC 49405 / DSM 1227 / KCTC 32145 / OM5) (Oligotropha carboxidovorans), this protein is Phosphomethylpyrimidine synthase.